The following is a 341-amino-acid chain: Phenylalanine--tRNA ligase alpha subunit (341 aa).

Glutamate 252 is a Mg(2+) binding site.

The protein belongs to the class-II aminoacyl-tRNA synthetase family. Phe-tRNA synthetase alpha subunit type 1 subfamily. In terms of assembly, tetramer of two alpha and two beta subunits. It depends on Mg(2+) as a cofactor.

It localises to the cytoplasm. The catalysed reaction is tRNA(Phe) + L-phenylalanine + ATP = L-phenylalanyl-tRNA(Phe) + AMP + diphosphate + H(+). This chain is Phenylalanine--tRNA ligase alpha subunit, found in Malacoplasma penetrans (strain HF-2) (Mycoplasma penetrans).